The following is a 393-amino-acid chain: Squamosa promoter-binding-like protein 17 (393 aa).

Residues 40–49 (AAAVESSSTS) show a composition bias toward low complexity. The interval 40–67 (AAAVESSSTSSGGGGKKGKGVAAAAAPP) is disordered. The segment at 71-148 (PPRCQVEGCG…AGHNERRRKP (78 aa)) adopts an SBP-type zinc-finger fold. Residues cysteine 74, cysteine 79, cysteine 96, histidine 99, cysteine 115, cysteine 118, histidine 122, and cysteine 134 each coordinate Zn(2+). Residues 131–147 (KKSCRRRLAGHNERRRK) carry the Bipartite nuclear localization signal motif. Positions 137–148 (RLAGHNERRRKP) are enriched in basic residues. Disordered regions lie at residues 137–158 (RLAG…SRYG), 273–301 (WDTT…GNNP), and 317–393 (GWNS…NWSL). 2 stretches are compositionally biased toward polar residues: residues 273–293 (WDTT…STAS) and 380–393 (GAFS…NWSL).

As to expression, expressed in young panicles.

The protein resides in the nucleus. Its function is as follows. Trans-acting factor that binds specifically to the consensus nucleotide sequence 5'-TNCGTACAA-3'. May be involved in panicle development. The protein is Squamosa promoter-binding-like protein 17 (SPL17) of Oryza sativa subsp. japonica (Rice).